A 380-amino-acid polypeptide reads, in one-letter code: Queuine tRNA-ribosyltransferase (380 aa).

Asp95 functions as the Proton acceptor in the catalytic mechanism. Residues 95 to 99, Asp149, Gln192, and Gly219 each bind substrate; that span reads DSGGF. Positions 250-256 are RNA binding; it reads GVGSPDA. The active-site Nucleophile is the Asp269. The segment at 274–278 is RNA binding; important for wobble base 34 recognition; the sequence is TRIAR. Cys307, Cys309, Cys312, and His338 together coordinate Zn(2+).

The protein belongs to the queuine tRNA-ribosyltransferase family. As to quaternary structure, homodimer. Within each dimer, one monomer is responsible for RNA recognition and catalysis, while the other monomer binds to the replacement base PreQ1. It depends on Zn(2+) as a cofactor.

It carries out the reaction 7-aminomethyl-7-carbaguanine + guanosine(34) in tRNA = 7-aminomethyl-7-carbaguanosine(34) in tRNA + guanine. It participates in tRNA modification; tRNA-queuosine biosynthesis. In terms of biological role, catalyzes the base-exchange of a guanine (G) residue with the queuine precursor 7-aminomethyl-7-deazaguanine (PreQ1) at position 34 (anticodon wobble position) in tRNAs with GU(N) anticodons (tRNA-Asp, -Asn, -His and -Tyr). Catalysis occurs through a double-displacement mechanism. The nucleophile active site attacks the C1' of nucleotide 34 to detach the guanine base from the RNA, forming a covalent enzyme-RNA intermediate. The proton acceptor active site deprotonates the incoming PreQ1, allowing a nucleophilic attack on the C1' of the ribose to form the product. After dissociation, two additional enzymatic reactions on the tRNA convert PreQ1 to queuine (Q), resulting in the hypermodified nucleoside queuosine (7-(((4,5-cis-dihydroxy-2-cyclopenten-1-yl)amino)methyl)-7-deazaguanosine). This is Queuine tRNA-ribosyltransferase from Latilactobacillus sakei subsp. sakei (strain 23K) (Lactobacillus sakei subsp. sakei).